Here is a 500-residue protein sequence, read N- to C-terminus: Probable malate:quinone oxidoreductase (500 aa).

Belongs to the MQO family. Requires FAD as cofactor.

The enzyme catalyses (S)-malate + a quinone = a quinol + oxaloacetate. It functions in the pathway carbohydrate metabolism; tricarboxylic acid cycle; oxaloacetate from (S)-malate (quinone route): step 1/1. The protein is Probable malate:quinone oxidoreductase of Bacillus thuringiensis (strain Al Hakam).